A 759-amino-acid polypeptide reads, in one-letter code: Rho GTPase-activating protein 26 (759 aa).

The 256-residue stretch at 7–262 folds into the BAR domain; the sequence is EFSDCYLDSP…MKENPHEHLA (256 aa). Positions 265 to 369 constitute a PH domain; the sequence is PYTMEGYLYV…WMEAMDGREP (105 aa). One can recognise a Rho-GAP domain in the interval 383–568; that stretch reads AQLDNIGFSI…IIIENYEKMF (186 aa). A disordered region spans residues 578-701; it reads NSQLHLSRKR…STSSDSSPVS (124 aa). Over residues 608-617 the composition is skewed to basic and acidic residues; the sequence is HNTEKEEKRN. Over residues 618 to 637 the composition is skewed to low complexity; sequence SVNSSAESVSSSNANSSANS. Residues 638–650 show a composition bias toward polar residues; sequence TCTQCSNMNNLNA. Over residues 679–701 the composition is skewed to low complexity; sequence PMFSAPSSPMPTSSTSSDSSPVS. The SH3 domain maps to 701-759; it reads SVPRKAKALYACKAEHDSELSFSAGTVFDNVYPSQEPGWLEGILNGKTGLIPENYVEFL.

It localises to the cell junction. Its subcellular location is the focal adhesion. The protein localises to the cytoplasm. The protein resides in the cytoskeleton. It is found in the endosome membrane. Its function is as follows. GTPase-activating protein for rhoa and cdc42. The chain is Rho GTPase-activating protein 26 (arhgap26) from Xenopus tropicalis (Western clawed frog).